We begin with the raw amino-acid sequence, 445 residues long: Methylenetetrahydrofolate--tRNA-(uracil-5-)-methyltransferase TrmFO (445 aa).

10–15 (GGGLAG) provides a ligand contact to FAD.

Belongs to the MnmG family. TrmFO subfamily. FAD is required as a cofactor.

The protein resides in the cytoplasm. It catalyses the reaction uridine(54) in tRNA + (6R)-5,10-methylene-5,6,7,8-tetrahydrofolate + NADH + H(+) = 5-methyluridine(54) in tRNA + (6S)-5,6,7,8-tetrahydrofolate + NAD(+). The catalysed reaction is uridine(54) in tRNA + (6R)-5,10-methylene-5,6,7,8-tetrahydrofolate + NADPH + H(+) = 5-methyluridine(54) in tRNA + (6S)-5,6,7,8-tetrahydrofolate + NADP(+). Functionally, catalyzes the folate-dependent formation of 5-methyl-uridine at position 54 (M-5-U54) in all tRNAs. This Microcystis aeruginosa (strain NIES-843 / IAM M-2473) protein is Methylenetetrahydrofolate--tRNA-(uracil-5-)-methyltransferase TrmFO.